The following is a 551-amino-acid chain: Glucose-6-phosphate isomerase (551 aa).

The active-site Proton donor is the glutamate 356. Catalysis depends on residues histidine 387 and lysine 515.

Belongs to the GPI family.

It localises to the cytoplasm. It carries out the reaction alpha-D-glucose 6-phosphate = beta-D-fructose 6-phosphate. The protein operates within carbohydrate biosynthesis; gluconeogenesis. It participates in carbohydrate degradation; glycolysis; D-glyceraldehyde 3-phosphate and glycerone phosphate from D-glucose: step 2/4. In terms of biological role, catalyzes the reversible isomerization of glucose-6-phosphate to fructose-6-phosphate. The polypeptide is Glucose-6-phosphate isomerase (Blochmanniella pennsylvanica (strain BPEN)).